The primary structure comprises 708 residues: ABC transporter G family member 18 (708 aa).

The region spanning 75–317 (RRRFDFSRRK…FSSFGRPIPE (243 aa)) is the ABC transporter domain. Residue 109–116 (GGSGAGKS) coordinates ATP. Residues 402 to 612 (AETFILAKRY…PYEAVLINEF (211 aa)) enclose the ABC transmembrane type-2 domain. 7 helical membrane-spanning segments follow: residues 421–441 (LIGM…TVYW), 456–476 (FFAF…PVFI), 508–528 (LLAL…LSGG), 537–557 (LIIY…SGLI), 560–580 (VMMS…LGGF), 589–609 (LYWI…AVLI), and 681–701 (LWIT…SLLF).

It belongs to the ABC transporter superfamily. ABCG family. Eye pigment precursor importer (TC 3.A.1.204) subfamily.

The protein resides in the membrane. The protein is ABC transporter G family member 18 (ABCG18) of Arabidopsis thaliana (Mouse-ear cress).